The following is a 453-amino-acid chain: Pup--protein ligase (453 aa).

E9 lines the Mg(2+) pocket. ATP is bound at residue R53. Mg(2+) is bound at residue Y55. D57 acts as the Proton acceptor in catalysis. Residue E63 participates in Mg(2+) binding. Residues T66 and W420 each contribute to the ATP site.

Belongs to the Pup ligase/Pup deamidase family. Pup-conjugating enzyme subfamily.

It carries out the reaction ATP + [prokaryotic ubiquitin-like protein]-L-glutamate + [protein]-L-lysine = ADP + phosphate + N(6)-([prokaryotic ubiquitin-like protein]-gamma-L-glutamyl)-[protein]-L-lysine.. Its pathway is protein degradation; proteasomal Pup-dependent pathway. It participates in protein modification; protein pupylation. Catalyzes the covalent attachment of the prokaryotic ubiquitin-like protein modifier Pup to the proteasomal substrate proteins, thereby targeting them for proteasomal degradation. This tagging system is termed pupylation. The ligation reaction involves the side-chain carboxylate of the C-terminal glutamate of Pup and the side-chain amino group of a substrate lysine. In Streptomyces griseus subsp. griseus (strain JCM 4626 / CBS 651.72 / NBRC 13350 / KCC S-0626 / ISP 5235), this protein is Pup--protein ligase.